The chain runs to 399 residues: Acetate kinase (399 aa).

Asn-8 contacts Mg(2+). Lys-15 serves as a coordination point for ATP. Position 89 (Arg-89) interacts with substrate. Asp-146 acts as the Proton donor/acceptor in catalysis. ATP is bound by residues 206–210 (HVGNG), 283–285 (DMR), and 331–335 (GMGEN). Glu-383 serves as a coordination point for Mg(2+).

Belongs to the acetokinase family. Homodimer. Mg(2+) serves as cofactor. Requires Mn(2+) as cofactor.

The protein resides in the cytoplasm. The catalysed reaction is acetate + ATP = acetyl phosphate + ADP. It functions in the pathway metabolic intermediate biosynthesis; acetyl-CoA biosynthesis; acetyl-CoA from acetate: step 1/2. Catalyzes the formation of acetyl phosphate from acetate and ATP. Can also catalyze the reverse reaction. The protein is Acetate kinase of Streptococcus equi subsp. zooepidemicus (strain H70).